The primary structure comprises 193 residues: UPF0397 protein PA0141 (193 aa).

A run of 5 helical transmembrane segments spans residues 11-31 (VTIA…SIPI), 43-63 (FLVF…GLLG), 69-89 (FFLF…LGFL), 109-129 (ILFF…LIAP), and 147-167 (GFLV…FLMS).

Belongs to the UPF0397 family.

The protein localises to the cell membrane. This Phytoplasma australiense protein is UPF0397 protein PA0141.